We begin with the raw amino-acid sequence, 222 residues long: TPR repeat-containing protein BH2049 (222 aa).

2 TPR repeats span residues 34–67 (AEPLFHLGNIHYAYGHKASAMNYWKEAVSKNREH) and 169–202 (PVGLKILGISSIRTNQYEAGLTFLEKSLELKEDK).

This is TPR repeat-containing protein BH2049 from Halalkalibacterium halodurans (strain ATCC BAA-125 / DSM 18197 / FERM 7344 / JCM 9153 / C-125) (Bacillus halodurans).